A 360-amino-acid chain; its full sequence is Phospho-N-acetylmuramoyl-pentapeptide-transferase (360 aa).

A run of 10 helical transmembrane segments spans residues 25 to 45 (RGILGVLTALCLSLFLGPWMI), 73 to 93 (TMGGALILSSIGISTLLWADL), 97 to 117 (YVWVVLLVTLLFGAIGWVDDY), 142 to 162 (VGAAIFLYTTAPSAVETTLII), 168 to 188 (ASIPLGIGFVVLTYFVIVGSS), 199 to 219 (GLAIMPTVMVGGALGIFCYLS), 236 to 256 (AGELIVFCGALIGAGLGFLWF), 263 to 283 (VFMGDVGALALGAALGTIAVI), 288 to 308 (IVLFIMGGVFVMETLSVVIQV), and 338 to 358 (VIVRFWIITVILVLVGLATLK).

The protein belongs to the glycosyltransferase 4 family. MraY subfamily. Requires Mg(2+) as cofactor.

Its subcellular location is the cell inner membrane. The enzyme catalyses UDP-N-acetyl-alpha-D-muramoyl-L-alanyl-gamma-D-glutamyl-meso-2,6-diaminopimeloyl-D-alanyl-D-alanine + di-trans,octa-cis-undecaprenyl phosphate = di-trans,octa-cis-undecaprenyl diphospho-N-acetyl-alpha-D-muramoyl-L-alanyl-D-glutamyl-meso-2,6-diaminopimeloyl-D-alanyl-D-alanine + UMP. Its pathway is cell wall biogenesis; peptidoglycan biosynthesis. Functionally, catalyzes the initial step of the lipid cycle reactions in the biosynthesis of the cell wall peptidoglycan: transfers peptidoglycan precursor phospho-MurNAc-pentapeptide from UDP-MurNAc-pentapeptide onto the lipid carrier undecaprenyl phosphate, yielding undecaprenyl-pyrophosphoryl-MurNAc-pentapeptide, known as lipid I. The protein is Phospho-N-acetylmuramoyl-pentapeptide-transferase of Pseudomonas fluorescens (strain SBW25).